The following is a 383-amino-acid chain: Mannan endo-1,4-beta-mannosidase A (383 aa).

A signal peptide spans 1 to 18 (MKFSQALLSLASLALAAA). An N-linked (GlcNAc...) asparagine glycan is attached at Asn75. Position 97 (Trp97) interacts with substrate. Asn199 carries N-linked (GlcNAc...) asparagine glycosylation. Substrate-binding positions include Asn210 and 211–213 (EPR). Glu211 acts as the Proton donor/acceptor in catalysis. A disulfide bridge links Cys214 with Cys217. Residues Tyr279 and Trp283 each coordinate substrate. Cys301 and Cys308 form a disulfide bridge. Catalysis depends on Glu312, which acts as the Nucleophile. An intrachain disulfide couples Cys320 to Cys369. N-linked (GlcNAc...) asparagine glycosylation is present at Asn332. Trp342 serves as a coordination point for substrate.

Belongs to the glycosyl hydrolase 5 (cellulase A) family. Monomer.

The protein localises to the secreted. It carries out the reaction Random hydrolysis of (1-&gt;4)-beta-D-mannosidic linkages in mannans, galactomannans and glucomannans.. In terms of biological role, endo-1,4-mannanase that catalyzes the random hydrolysis of (1-&gt;4)-beta-D-mannosidic linkages in mannans and heteromannans. It is a crucial enzyme for depolymerization of seed galactomannans and wood galactoglucomannans. Active against locust bean gum and gum guar. Also has transglycosylation activity. In Emericella nidulans (strain FGSC A4 / ATCC 38163 / CBS 112.46 / NRRL 194 / M139) (Aspergillus nidulans), this protein is Mannan endo-1,4-beta-mannosidase A (manA).